The chain runs to 532 residues: MWDYVKLVALGVVAAIAAYAASQARDLPYMVNMVEVALAAVIALIWVLRTMGDPKPSKDEYFDGVIRAGVIATTFWGIVGFLVAVVIAFQLAFPALNLEFGNGMLNFGRLRPLHTSAVIFAFGGNALIASAFYVVQRTSAARLFGGTALGWFVFWGWQLIIVTAATSYLLGGSQGKEYAELNWHLDILVAVVWVAYLIAFLGTIFKRKEPHIYVANWFYLSFIVTIAMLHIVNNLAVPVSIFGTKSVQLMAGVQDAMTQWWYGHNAVGFFLTAGFLGMMYYFVPKQAERPVYSYKLSIVHFWALIFLYIWAGPHHLHYTALPDWASTLGMVMSVILWMPSWGGMINGLMTLSGAWDKLRTDPVIRMMVVSIGFYGMSTFEGPMMSIKAVNSLSHYTDWTIGHVHSGALGWNGMITFGMLYFLTPRLWGRSGLYSLKLVSWHFWLATIGIVLYASAMWVTGIMEGLMWREVDAQGFLVNAFADTVAAKFPMYVVRGVGGVLYLLGGLIMAYNLWATVAKQPKTANLAVAVPAE.

A run of 3 helical transmembrane segments spans residues 1–21, 27–47, and 69–89; these read MWDY…AYAA, LPYM…LIWV, and GVIA…VIAF. Residue His-114 participates in heme b binding. 8 helical membrane-spanning segments follow: residues 115 to 135, 143 to 163, 185 to 205, 212 to 232, 263 to 283, 296 to 316, 328 to 348, and 366 to 386; these read TSAV…FYVV, LFGG…IIVT, LDIL…GTIF, IYVA…LHIV, GHNA…YYFV, LSIV…PHHL, LGMV…INGL, and MMVV…MMSI. Cu cation-binding residues include His-264, His-314, and His-315. The heme b site is built by His-402 and His-404. The next 3 membrane-spanning stretches (helical) occupy residues 403–423, 442–462, and 496–516; these read VHSG…YFLT, FWLA…TGIM, and VGGV…WATV.

Belongs to the heme-copper respiratory oxidase family. It depends on Cu(2+) as a cofactor. The cofactor is heme b.

It is found in the cell membrane. It catalyses the reaction 4 Fe(II)-[cytochrome c] + O2 + 8 H(+)(in) = 4 Fe(III)-[cytochrome c] + 2 H2O + 4 H(+)(out). It functions in the pathway energy metabolism; oxidative phosphorylation. Its function is as follows. Cytochrome c oxidase is the component of the respiratory chain that catalyzes the reduction of oxygen to water. Subunits 1-3 form the functional core of the enzyme complex. Co I is the catalytic subunit of the enzyme. Electrons originating in cytochrome c are transferred via the copper A center of subunit 2 and heme a of subunit 1 to the bimetallic center formed by heme a3 and copper B. This cytochrome c oxidase shows proton pump activity across the membrane in addition to the electron transfer. This Rhodobacter capsulatus (Rhodopseudomonas capsulata) protein is Cytochrome c oxidase subunit 1 (ctaD).